Here is a 164-residue protein sequence, read N- to C-terminus: Thiol peroxidase (164 aa).

Residues Val18–Asn163 enclose the Thioredoxin domain. The active-site Cysteine sulfenic acid (-SOH) intermediate is Cys60. The cysteines at positions 60 and 93 are disulfide-linked.

This sequence belongs to the peroxiredoxin family. Tpx subfamily. As to quaternary structure, homodimer.

It carries out the reaction a hydroperoxide + [thioredoxin]-dithiol = an alcohol + [thioredoxin]-disulfide + H2O. Its function is as follows. Thiol-specific peroxidase that catalyzes the reduction of hydrogen peroxide and organic hydroperoxides to water and alcohols, respectively. Plays a role in cell protection against oxidative stress by detoxifying peroxides. The chain is Thiol peroxidase from Staphylococcus saprophyticus subsp. saprophyticus (strain ATCC 15305 / DSM 20229 / NCIMB 8711 / NCTC 7292 / S-41).